The following is a 431-amino-acid chain: UPF0597 protein TDE_2144 (431 aa).

Belongs to the UPF0597 family.

The protein is UPF0597 protein TDE_2144 of Treponema denticola (strain ATCC 35405 / DSM 14222 / CIP 103919 / JCM 8153 / KCTC 15104).